The primary structure comprises 292 residues: ATP synthase gamma chain (292 aa).

The protein belongs to the ATPase gamma chain family. As to quaternary structure, F-type ATPases have 2 components, CF(1) - the catalytic core - and CF(0) - the membrane proton channel. CF(1) has five subunits: alpha(3), beta(3), gamma(1), delta(1), epsilon(1). CF(0) has three main subunits: a, b and c.

It localises to the cell inner membrane. In terms of biological role, produces ATP from ADP in the presence of a proton gradient across the membrane. The gamma chain is believed to be important in regulating ATPase activity and the flow of protons through the CF(0) complex. This Nitrobacter hamburgensis (strain DSM 10229 / NCIMB 13809 / X14) protein is ATP synthase gamma chain.